We begin with the raw amino-acid sequence, 434 residues long: Lipoyl synthase, mitochondrial (434 aa).

A mitochondrion-targeting transit peptide spans 1–31 (MAASARGLRTLQSAHSSTTVPRLQLAVSRCY). A compositionally biased stretch (low complexity) spans 34–54 (TTSPDPPITNSSNSSNSTPTP). The disordered stretch occupies residues 34-55 (TTSPDPPITNSSNSSNSTPTPK). Positions 144, 149, 155, 175, 179, 182, and 390 each coordinate [4Fe-4S] cluster. The Radical SAM core domain maps to 158 to 379 (GSSKSAATAT…KERALEMGFL (222 aa)).

Belongs to the radical SAM superfamily. Lipoyl synthase family. The cofactor is [4Fe-4S] cluster.

The protein resides in the mitochondrion. The catalysed reaction is [[Fe-S] cluster scaffold protein carrying a second [4Fe-4S](2+) cluster] + N(6)-octanoyl-L-lysyl-[protein] + 2 oxidized [2Fe-2S]-[ferredoxin] + 2 S-adenosyl-L-methionine + 4 H(+) = [[Fe-S] cluster scaffold protein] + N(6)-[(R)-dihydrolipoyl]-L-lysyl-[protein] + 4 Fe(3+) + 2 hydrogen sulfide + 2 5'-deoxyadenosine + 2 L-methionine + 2 reduced [2Fe-2S]-[ferredoxin]. It functions in the pathway protein modification; protein lipoylation via endogenous pathway; protein N(6)-(lipoyl)lysine from octanoyl-[acyl-carrier-protein]: step 2/2. Its function is as follows. Catalyzes the radical-mediated insertion of two sulfur atoms into the C-6 and C-8 positions of the octanoyl moiety bound to the lipoyl domains of lipoate-dependent enzymes, thereby converting the octanoylated domains into lipoylated derivatives. The sequence is that of Lipoyl synthase, mitochondrial from Paracoccidioides brasiliensis (strain Pb03).